The primary structure comprises 238 residues: Uridylate kinase (238 aa).

An ATP-binding site is contributed by 12–15; sequence KLSG. Position 54 (Gly54) interacts with UMP. Positions 55 and 59 each coordinate ATP. UMP contacts are provided by residues Asp74 and 135-142; that span reads TGNPYFTT. The ATP site is built by Thr162, Tyr168, and Asp171.

The protein belongs to the UMP kinase family. In terms of assembly, homohexamer.

Its subcellular location is the cytoplasm. It catalyses the reaction UMP + ATP = UDP + ADP. It functions in the pathway pyrimidine metabolism; CTP biosynthesis via de novo pathway; UDP from UMP (UMPK route): step 1/1. With respect to regulation, inhibited by UTP. Catalyzes the reversible phosphorylation of UMP to UDP. The polypeptide is Uridylate kinase (Oleidesulfovibrio alaskensis (strain ATCC BAA-1058 / DSM 17464 / G20) (Desulfovibrio alaskensis)).